Reading from the N-terminus, the 137-residue chain is LVAVCVSLLGAANIPPQPLNLQQFKNMIQCAGTRTWTAYINYGCYCGKGGSGTPVDKLDRCCYTHDHCYNQADSIPGCNPNIKTYSYTCTQPNITCTRTADACAKFLCDCDRTAAICFASAPYNINNIMISASNSCQ.

Residues 1 to 11 (LVAVCVSLLGA) form the signal peptide. Positions 12 to 19 (ANIPPQPL) are excised as a propeptide. 7 cysteine pairs are disulfide-bonded: Cys30/Cys89, Cys44/Cys136, Cys46/Cys62, Cys61/Cys117, Cys68/Cys110, Cys78/Cys103, and Cys96/Cys108. Residues Tyr45, Gly47, and Gly49 each contribute to the Ca(2+) site. His65 is a catalytic residue. Asp66 contacts Ca(2+). Asp111 is an active-site residue.

Belongs to the phospholipase A2 family. Group I subfamily. D49 sub-subfamily. As to quaternary structure, monomer, or homotrimer. Was firstly described as a trimer, but has been reinterpreted with the possibility of being a monomer. It depends on Ca(2+) as a cofactor. In terms of tissue distribution, expressed by the venom gland.

Its subcellular location is the secreted. The catalysed reaction is a 1,2-diacyl-sn-glycero-3-phosphocholine + H2O = a 1-acyl-sn-glycero-3-phosphocholine + a fatty acid + H(+). Its function is as follows. Snake venom phospholipase A2 (PLA2) that shows anticoagulant and neurotoxic activities. PLA2 catalyzes the calcium-dependent hydrolysis of the 2-acyl groups in 3-sn-phosphoglycerides. This chain is Basic phospholipase A2 3, found in Bungarus caeruleus (Indian krait).